Here is a 566-residue protein sequence, read N- to C-terminus: Putative UDP-glucuronate:xylan alpha-glucuronosyltransferase 5 (566 aa).

The chain crosses the membrane as a helical; Signal-anchor for type II membrane protein span at residues 17-37 (LILISLSFLGLLLNFKPLFLL). The Mn(2+) site is built by aspartate 372 and aspartate 374. Residues 372–374 (DAD), 401–403 (NSG), 428–432 (NGGDQ), and 475–480 (HYLGLK) contribute to the substrate site. Histidine 475 lines the Mn(2+) pocket.

This sequence belongs to the glycosyltransferase 8 family. Glycogenin subfamily. The cofactor is Mn(2+).

The protein resides in the golgi apparatus membrane. In terms of biological role, may be involved in the substitutions of the xylan backbone in stem glucuronoxylan. This chain is Putative UDP-glucuronate:xylan alpha-glucuronosyltransferase 5 (GUX5), found in Arabidopsis thaliana (Mouse-ear cress).